A 521-amino-acid polypeptide reads, in one-letter code: Ribonuclease Y (521 aa).

Residues 5–25 form a helical membrane-spanning segment; the sequence is MMTMILAVIAAAIGFLIGNLL. Positions 211–271 constitute a KH domain; that stretch reads TVSVVALPSD…VRREVAKLSL (61 aa). The HD domain occupies 337–430; that stretch reads VYQHSLEVAF…VQAADALSGA (94 aa).

It belongs to the RNase Y family.

Its subcellular location is the cell membrane. Its function is as follows. Endoribonuclease that initiates mRNA decay. The polypeptide is Ribonuclease Y (Geotalea uraniireducens (strain Rf4) (Geobacter uraniireducens)).